A 418-amino-acid polypeptide reads, in one-letter code: Serine hydroxymethyltransferase (418 aa).

(6S)-5,6,7,8-tetrahydrofolate-binding positions include leucine 121 and 125-127 (GHL). Lysine 230 is subject to N6-(pyridoxal phosphate)lysine. Residue 355 to 357 (SPF) coordinates (6S)-5,6,7,8-tetrahydrofolate.

This sequence belongs to the SHMT family. As to quaternary structure, homodimer. Pyridoxal 5'-phosphate serves as cofactor.

The protein resides in the cytoplasm. The enzyme catalyses (6R)-5,10-methylene-5,6,7,8-tetrahydrofolate + glycine + H2O = (6S)-5,6,7,8-tetrahydrofolate + L-serine. It participates in one-carbon metabolism; tetrahydrofolate interconversion. It functions in the pathway amino-acid biosynthesis; glycine biosynthesis; glycine from L-serine: step 1/1. Functionally, catalyzes the reversible interconversion of serine and glycine with tetrahydrofolate (THF) serving as the one-carbon carrier. This reaction serves as the major source of one-carbon groups required for the biosynthesis of purines, thymidylate, methionine, and other important biomolecules. Also exhibits THF-independent aldolase activity toward beta-hydroxyamino acids, producing glycine and aldehydes, via a retro-aldol mechanism. The chain is Serine hydroxymethyltransferase from Streptococcus agalactiae serotype III (strain NEM316).